The chain runs to 414 residues: Cell division protein FtsA (414 aa).

This sequence belongs to the FtsA/MreB family. In terms of assembly, self-interacts. Interacts with FtsZ.

It is found in the cell inner membrane. In terms of biological role, cell division protein that is involved in the assembly of the Z ring. May serve as a membrane anchor for the Z ring. The protein is Cell division protein FtsA of Neisseria meningitidis serogroup B (strain ATCC BAA-335 / MC58).